The chain runs to 497 residues: Probable cytosol aminopeptidase (497 aa).

Residues lysine 267 and aspartate 272 each coordinate Mn(2+). The active site involves lysine 279. Residues aspartate 290, aspartate 349, and glutamate 351 each contribute to the Mn(2+) site. Residue arginine 353 is part of the active site.

This sequence belongs to the peptidase M17 family. Mn(2+) is required as a cofactor.

It localises to the cytoplasm. It carries out the reaction Release of an N-terminal amino acid, Xaa-|-Yaa-, in which Xaa is preferably Leu, but may be other amino acids including Pro although not Arg or Lys, and Yaa may be Pro. Amino acid amides and methyl esters are also readily hydrolyzed, but rates on arylamides are exceedingly low.. It catalyses the reaction Release of an N-terminal amino acid, preferentially leucine, but not glutamic or aspartic acids.. Presumably involved in the processing and regular turnover of intracellular proteins. Catalyzes the removal of unsubstituted N-terminal amino acids from various peptides. The protein is Probable cytosol aminopeptidase of Pseudomonas putida (strain ATCC 47054 / DSM 6125 / CFBP 8728 / NCIMB 11950 / KT2440).